The sequence spans 184 residues: UPF0179 protein Pcal_2106 (184 aa).

The segment covering G146–L161 has biased composition (low complexity). The interval G146–P184 is disordered.

This sequence belongs to the UPF0179 family.

The sequence is that of UPF0179 protein Pcal_2106 from Pyrobaculum calidifontis (strain DSM 21063 / JCM 11548 / VA1).